We begin with the raw amino-acid sequence, 517 residues long: Mitochondrial division protein fszA (517 aa).

GTP contacts are provided by residues Gly-60–Asn-64, Gly-147–Gly-149, Glu-178, Arg-182, and Asp-225. The interval Phe-496–Glu-517 is disordered. Low complexity predominate over residues Thr-497–Glu-517.

The protein belongs to the FtsZ family.

It localises to the mitochondrion matrix. In terms of biological role, probably involved in mitochondrion division process. When overexpressed, induces mitochondrial tubule formation. Binds to and hydrolyzes GTP. In Dictyostelium discoideum (Social amoeba), this protein is Mitochondrial division protein fszA (fszA).